The sequence spans 1372 residues: DNA-directed RNA polymerase subunit beta' (1372 aa).

Cys-69, Cys-71, Cys-84, and Cys-87 together coordinate Zn(2+). Residues Asp-460, Asp-462, and Asp-464 each coordinate Mg(2+). Zn(2+) contacts are provided by Cys-808, Cys-882, Cys-889, and Cys-892.

Belongs to the RNA polymerase beta' chain family. The RNAP catalytic core consists of 2 alpha, 1 beta, 1 beta' and 1 omega subunit. When a sigma factor is associated with the core the holoenzyme is formed, which can initiate transcription. Mg(2+) is required as a cofactor. The cofactor is Zn(2+).

It carries out the reaction RNA(n) + a ribonucleoside 5'-triphosphate = RNA(n+1) + diphosphate. Functionally, DNA-dependent RNA polymerase catalyzes the transcription of DNA into RNA using the four ribonucleoside triphosphates as substrates. This Rickettsia rickettsii (strain Iowa) protein is DNA-directed RNA polymerase subunit beta'.